The chain runs to 63 residues: MKMRTHSGAKKRLKVLSSGKVKKKSTRMRHLNSHMSSKTKRQLGKTSYVEDANMLQVRRCLVF.

The span at 1-43 (MKMRTHSGAKKRLKVLSSGKVKKKSTRMRHLNSHMSSKTKRQL) shows a compositional bias: basic residues. A disordered region spans residues 1-45 (MKMRTHSGAKKRLKVLSSGKVKKKSTRMRHLNSHMSSKTKRQLGK).

The protein belongs to the bacterial ribosomal protein bL35 family.

The polypeptide is Large ribosomal subunit protein bL35 (Bdellovibrio bacteriovorus (strain ATCC 15356 / DSM 50701 / NCIMB 9529 / HD100)).